An 875-amino-acid chain; its full sequence is Lysine-specific demethylase JMJ26 (875 aa).

Residues 31–103 form a disordered region; that stretch reads KPVEATSLSS…RSSVKKRATT (73 aa). The Nuclear localization signal signature appears at 62 to 69; the sequence is RKRSKADE. A compositionally biased stretch (basic and acidic residues) spans 79 to 93; that stretch reads KCDDENKCEENEKKQ. Positions 193, 196, 207, 210, 216, 219, 236, 239, 322, 325, 339, and 347 each coordinate Zn(2+). Residues 193-240 form an RING-type; degenerate zinc finger; it reads CHQCSKGERRYLFICTFCEVRLYCFPCIKKWYPHLSTDDILEKCPFCR. Residues 317-347 form a B box-type; degenerate zinc finger; it reads EERVFCNHCATSIVDLHRSCPKCSYELCLNC. One can recognise a JmjC domain in the interval 614 to 837; it reads PRSGILNIAT…ECLRLTDEFR (224 aa). His-658, Asp-660, and His-805 together coordinate Fe cation.

It belongs to the JARID1 histone demethylase family. It depends on Fe(2+) as a cofactor. As to expression, expressed in inflorescences, roots, siliques, leaves and stems.

The protein resides in the nucleus. Its function is as follows. May function as histone H3 lysine demethylase and be involved in regulation of gene expression. The protein is Lysine-specific demethylase JMJ26 of Arabidopsis thaliana (Mouse-ear cress).